A 191-amino-acid chain; its full sequence is MNKKIVLFGGQFNPIHTAHLAVASEVYHAIKPDIFFFLPSYMAPLKHHNTQLYSEHRVKMIQLAIKEIGFGEICTTDLDRKGPSYTYETILHLKEIYHNAQLYFIIGTDQYNQLDKWYKINELKKLVTFIVVNRETDNQNVSKEMISIKIPRIDISSTMIRNRVRMNQSIKVLVPKRVENYIKEEGFYGDK.

Belongs to the NadD family.

The enzyme catalyses nicotinate beta-D-ribonucleotide + ATP + H(+) = deamido-NAD(+) + diphosphate. Its pathway is cofactor biosynthesis; NAD(+) biosynthesis; deamido-NAD(+) from nicotinate D-ribonucleotide: step 1/1. In terms of biological role, catalyzes the reversible adenylation of nicotinate mononucleotide (NaMN) to nicotinic acid adenine dinucleotide (NaAD). This chain is Probable nicotinate-nucleotide adenylyltransferase, found in Staphylococcus epidermidis (strain ATCC 12228 / FDA PCI 1200).